A 476-amino-acid chain; its full sequence is Bifunctional protein HldE (476 aa).

The segment at Met-1–Thr-318 is ribokinase. An ATP-binding site is contributed by Asn-195–Glu-198. Asp-264 is an active-site residue. A cytidylyltransferase region spans residues Met-344 to Gly-476.

It in the N-terminal section; belongs to the carbohydrate kinase PfkB family. In the C-terminal section; belongs to the cytidylyltransferase family. As to quaternary structure, homodimer.

It carries out the reaction D-glycero-beta-D-manno-heptose 7-phosphate + ATP = D-glycero-beta-D-manno-heptose 1,7-bisphosphate + ADP + H(+). It catalyses the reaction D-glycero-beta-D-manno-heptose 1-phosphate + ATP + H(+) = ADP-D-glycero-beta-D-manno-heptose + diphosphate. The protein operates within nucleotide-sugar biosynthesis; ADP-L-glycero-beta-D-manno-heptose biosynthesis; ADP-L-glycero-beta-D-manno-heptose from D-glycero-beta-D-manno-heptose 7-phosphate: step 1/4. It participates in nucleotide-sugar biosynthesis; ADP-L-glycero-beta-D-manno-heptose biosynthesis; ADP-L-glycero-beta-D-manno-heptose from D-glycero-beta-D-manno-heptose 7-phosphate: step 3/4. Its function is as follows. Catalyzes the phosphorylation of D-glycero-D-manno-heptose 7-phosphate at the C-1 position to selectively form D-glycero-beta-D-manno-heptose-1,7-bisphosphate. In terms of biological role, catalyzes the ADP transfer from ATP to D-glycero-beta-D-manno-heptose 1-phosphate, yielding ADP-D-glycero-beta-D-manno-heptose. The protein is Bifunctional protein HldE of Vibrio cholerae serotype O1 (strain ATCC 39541 / Classical Ogawa 395 / O395).